Consider the following 215-residue polypeptide: Putative B3 domain-containing protein Os11g0625400 (215 aa).

A DNA-binding region (TF-B3 1) is located at residues 1–51; it reads MTVELEKIAGSFFISKGWKTFVHRTGLLSGQYIRFQVLTPSKINVLLFDKK. The tract at residues 92 to 117 is disordered; the sequence is SHTSNKETSSDSRTESMTDIPSSSDN. The segment covering 95-107 has biased composition (basic and acidic residues); sequence SNKETSSDSRTES. The span at 108–117 shows a compositional bias: polar residues; that stretch reads MTDIPSSSDN. The segment at residues 123–215 is a DNA-binding region (TF-B3 2); sequence DIKNYISIIG…PNVKITIDVL (93 aa).

Its subcellular location is the nucleus. The sequence is that of Putative B3 domain-containing protein Os11g0625400 from Oryza sativa subsp. japonica (Rice).